The sequence spans 329 residues: uncharacterized protein (329 aa).

2 disordered regions span residues R16 to C41 and L183 to P229. Residues S213–P229 are compositionally biased toward basic and acidic residues.

Expressed in testis and epididymis. Expressed at lower levels in ovary.

Its function is as follows. Dispensable for normal development and fertility. This is an uncharacterized protein from Mus musculus (Mouse).